The chain runs to 37 residues: Potassium channel toxin alpha-KTx 2.14 (37 aa).

Intrachain disulfides connect C7/C28, C13/C33, and C17/C35.

The protein belongs to the short scorpion toxin superfamily. Potassium channel inhibitor family. Alpha-KTx 02 subfamily. Expressed by the venom gland.

Its subcellular location is the secreted. In terms of biological role, reversibly blocks hKv1.1/KCNA1 (50% inhibition of current at 1 uM). Seems not to be voltage-dependent. This chain is Potassium channel toxin alpha-KTx 2.14, found in Heteroctenus garridoi (Cuban scorpion).